The following is a 140-amino-acid chain: Putative nickel-responsive regulator (140 aa).

Ni(2+)-binding residues include histidine 76, histidine 87, histidine 89, and cysteine 95.

It belongs to the transcriptional regulatory CopG/NikR family. It depends on Ni(2+) as a cofactor.

In terms of biological role, transcriptional regulator. The chain is Putative nickel-responsive regulator from Rhodopseudomonas palustris (strain BisB5).